Reading from the N-terminus, the 186-residue chain is C-type lectin domain family 19 member A (186 aa).

The signal sequence occupies residues 1-19; the sequence is MQRWTLWAAAFLTLHSAQA. One can recognise a C-type lectin domain in the interval 47-179; it reads FKGHCYRFFP…CSRKFPFVCK (133 aa). N58 carries N-linked (GlcNAc...) asparagine glycosylation. 2 disulfides stabilise this stretch: C68–C178 and C151–C170.

It localises to the secreted. This Homo sapiens (Human) protein is C-type lectin domain family 19 member A.